We begin with the raw amino-acid sequence, 871 residues long: Alanine--tRNA ligase (871 aa).

Zn(2+)-binding residues include histidine 559, histidine 563, cysteine 661, and histidine 665.

It belongs to the class-II aminoacyl-tRNA synthetase family. Zn(2+) serves as cofactor.

Its subcellular location is the cytoplasm. It carries out the reaction tRNA(Ala) + L-alanine + ATP = L-alanyl-tRNA(Ala) + AMP + diphosphate. Its function is as follows. Catalyzes the attachment of alanine to tRNA(Ala) in a two-step reaction: alanine is first activated by ATP to form Ala-AMP and then transferred to the acceptor end of tRNA(Ala). Also edits incorrectly charged Ser-tRNA(Ala) and Gly-tRNA(Ala) via its editing domain. This chain is Alanine--tRNA ligase, found in Aquifex pyrophilus.